We begin with the raw amino-acid sequence, 297 residues long: Magnetosome protein MamB (297 aa).

Residues 1–12 (MKFENCRDCREE) are Cytoplasmic-facing. The interval 1–214 (MKFENCRDCR…GLMDSSVDTE (214 aa)) is transmembrane domain (TMD). A helical transmembrane segment spans residues 13–33 (VVWWAFTADICMTLFKGILGL). Over 34–83 (MSGSVALVADSLHSGADVVASGVTQLSLKISNKPADERYPFGYGNIQYIS) the chain is Lumenal. Residues 84 to 104 (SAIVGSLLLIGASFLMYGSVV) traverse the membrane as a helical segment. Residues 105–112 (KLISGTYE) lie on the Cytoplasmic side of the membrane. The chain crosses the membrane as a helical span at residues 113 to 133 (APSIFAALGASVTVIVNELMY). The Lumenal segment spans residues 134–164 (RYQICVGNENNSPAIIANAWDNRSDAISSAA). The chain crosses the membrane as a helical span at residues 165-185 (VMVGVIASVIGFPIADTIAAI). The Cytoplasmic portion of the chain corresponds to 186-297 (GVSALVGHIG…PAPAAVTVRV (112 aa)). Residues 215-297 (LLQTAWQIAT…PAPAAVTVRV (83 aa)) form a C-terminal domain (CTD) region.

Belongs to the cation diffusion facilitator (CDF) transporter (TC 2.A.4) family. As to quaternary structure, forms homodimers via its C-terminal domain, may form higher order multimers that are sensitive to reducing agent. Probably interacts with MamE. Interacts with MamM via their C-terminal domains.

It is found in the cell inner membrane. Its subcellular location is the magnetosome membrane. Functionally, plays a dual, essential role in magnetosome formation; required for magnetosome vesicle formation as well as biomineralization. Requires heterodimerization with MamM for stability. Probably binds and transports iron. One of 7 genes (mamLQBIEMO) able to induce magnetosome membrane biogenesis; coexpression of mamLQRBIEMO in a deletion of the 17 gene mamAB operon restores magnetosome vesicle formation but not magnetite biosynthesis. This chain is Magnetosome protein MamB, found in Magnetospirillum gryphiswaldense (strain DSM 6361 / JCM 21280 / NBRC 15271 / MSR-1).